We begin with the raw amino-acid sequence, 165 residues long: Large ribosomal subunit protein uL15 (165 aa).

The segment covering 1 to 30 has biased composition (basic residues); that stretch reads MTNKKRRQRGSRTHGGGTHKNRRGAGHRGG. Disordered stretches follow at residues 1 to 39 and 137 to 165; these read MTNKKRRQRGSRTHGGGTHKNRRGAGHRGGRGAAGRAKH and AGGEATLSERAEEAADESENTSDDEDDEA. Residues 150–165 are compositionally biased toward acidic residues; that stretch reads AADESENTSDDEDDEA.

Belongs to the universal ribosomal protein uL15 family. Part of the 50S ribosomal subunit.

Binds to the 23S rRNA. In Halorubrum lacusprofundi (strain ATCC 49239 / DSM 5036 / JCM 8891 / ACAM 34), this protein is Large ribosomal subunit protein uL15.